A 150-amino-acid polypeptide reads, in one-letter code: FAD synthase (150 aa).

Residues 16–17, 21–24, and Asp-102 contribute to the ATP site; these read VF and HVGH.

It belongs to the archaeal FAD synthase family. As to quaternary structure, homodimer. A divalent metal cation is required as a cofactor.

The catalysed reaction is FMN + ATP + H(+) = FAD + diphosphate. It participates in cofactor biosynthesis; FAD biosynthesis; FAD from FMN: step 1/1. Catalyzes the transfer of the AMP portion of ATP to flavin mononucleotide (FMN) to produce flavin adenine dinucleotide (FAD) coenzyme. The polypeptide is FAD synthase (Thermococcus onnurineus (strain NA1)).